The sequence spans 592 residues: Arginine--tRNA ligase (592 aa).

A 'HIGH' region motif is present at residues 134–144 (ANPTGPLHVGH).

Belongs to the class-I aminoacyl-tRNA synthetase family. In terms of assembly, monomer.

Its subcellular location is the cytoplasm. The catalysed reaction is tRNA(Arg) + L-arginine + ATP = L-arginyl-tRNA(Arg) + AMP + diphosphate. In Coxiella burnetii (strain CbuG_Q212) (Coxiella burnetii (strain Q212)), this protein is Arginine--tRNA ligase.